The following is a 135-amino-acid chain: MPPKSRTATASRKPRRKEKKNVAHGHAHIKSTFNNTIVSITDPTGAVIAWASAGQVGFKGSRKSTPFAAQMAAEAAARRAQEHGMRKVDVFVKGPGSGRETAIRSLQATGLEVGAIQDVTPSPHNGCRPPKRRRV.

Residues 1 to 10 show a composition bias toward polar residues; sequence MPPKSRTATA. 2 disordered regions span residues 1–27 and 114–135; these read MPPK…HGHA and GAIQ…RRRV. The segment covering 12 to 27 has biased composition (basic residues); the sequence is RKPRRKEKKNVAHGHA.

This sequence belongs to the universal ribosomal protein uS11 family. As to quaternary structure, part of the 30S ribosomal subunit. Interacts with proteins S7 and S18. Binds to IF-3.

Located on the platform of the 30S subunit, it bridges several disparate RNA helices of the 16S rRNA. Forms part of the Shine-Dalgarno cleft in the 70S ribosome. The chain is Small ribosomal subunit protein uS11 from Kineococcus radiotolerans (strain ATCC BAA-149 / DSM 14245 / SRS30216).